A 103-amino-acid chain; its full sequence is MYAVIVTGGKQYKVAEGEFLKIEKLEVGTGESVTFDRVLLVGNGDDVKIGAPVVDGAKVTAEVVGQGRHDKVSIIKFRRRKHHMKHQGHRQWFTEVKITGIQA.

The protein belongs to the bacterial ribosomal protein bL21 family. Part of the 50S ribosomal subunit. Contacts protein L20.

Functionally, this protein binds to 23S rRNA in the presence of protein L20. The chain is Large ribosomal subunit protein bL21 from Azotobacter vinelandii (strain DJ / ATCC BAA-1303).